The following is a 223-amino-acid chain: MSFAQQKLSELAVSIPGATKIFREYDLDFCCGGSVLLEVAAQQKNLNLAEIEKRLTDLQQSKAENNDKDWTSASYAEMIDHIITRFHNRHREQLPELITLAEKVENIHGDRDDCPIGVVAQLEKIYAELSQHLMKEEQILFPMIKMGNYAMASMPIRVMEMEHDEAGQDVEVIKSLTNNCTPPADACFSWKALYSGINEFIDDLMHHIHLENNILFPRVLNEK.

Belongs to the RIC family.

The protein localises to the cytoplasm. Its function is as follows. Di-iron-containing protein involved in the repair of iron-sulfur clusters. This Haemophilus influenzae (strain ATCC 51907 / DSM 11121 / KW20 / Rd) protein is Probable iron-sulfur cluster repair protein HI_1677.